The chain runs to 214 residues: Rac-like GTP-binding protein 2 (214 aa).

14 to 21 is a binding site for GTP; the sequence is GDGAVGKT. The short motif at 36-44 is the Effector region element; sequence YIPTVFDNF. GTP is bound by residues 61 to 65 and 119 to 122; these read DTAGQ and TKLD.

It belongs to the small GTPase superfamily. Rho family. May be palmitoylated.

The protein resides in the cytoplasm. It localises to the membrane. Functionally, inactive GDP-bound Rho GTPases reside in the cytosol, are found in a complex with Rho GDP-dissociation inhibitors (Rho GDIs), and are released from the GDI protein in order to translocate to membranes upon activation. The protein is Rac-like GTP-binding protein 2 (RAC2) of Oryza sativa subsp. japonica (Rice).